The primary structure comprises 223 residues: MALSRAKPDELPRDAVVITEDQALKYQWKIITSWDKIGEVWSLRYTPGILSALAAGTGAYINNHYRTKLRLGGHGRLSTYLPIVAVPAIFTMLAHKFFIQRPILLNPLGECPVCIQMRSAAFQTSLGIVYPTILAPFAAFLFATRCYTYRIPSITENPREVFLLWRKFTRPIVPALGTLIGLQALLTMFLTGQEDKQNFKLMLRMREIEHQVEEEHLPQRMDF.

Residues 1–39 are Mitochondrial matrix-facing; it reads MALSRAKPDELPRDAVVITEDQALKYQWKIITSWDKIGE. The helical transmembrane segment at 40–62 threads the bilayer; it reads VWSLRYTPGILSALAAGTGAYIN. Over 63-78 the chain is Mitochondrial intermembrane; that stretch reads NHYRTKLRLGGHGRLS. The helical transmembrane segment at 79–99 threads the bilayer; the sequence is TYLPIVAVPAIFTMLAHKFFI. At 100 to 123 the chain is on the mitochondrial matrix side; that stretch reads QRPILLNPLGECPVCIQMRSAAFQ. Residues 124-144 form a helical membrane-spanning segment; the sequence is TSLGIVYPTILAPFAAFLFAT. The Mitochondrial intermembrane segment spans residues 145 to 171; sequence RCYTYRIPSITENPREVFLLWRKFTRP. A helical transmembrane segment spans residues 172 to 192; sequence IVPALGTLIGLQALLTMFLTG. The Mitochondrial matrix portion of the chain corresponds to 193–223; sequence QEDKQNFKLMLRMREIEHQVEEEHLPQRMDF.

This sequence belongs to the TMEM126 family. In terms of assembly, associates with mitochondrial complex I assembly intermediates during its biogenesis.

The protein resides in the mitochondrion membrane. Its function is as follows. As part of the MCIA complex, involved in the assembly of the mitochondrial complex I. The protein is Transmembrane protein 126 of Drosophila melanogaster (Fruit fly).